The chain runs to 205 residues: Guanylate kinase (205 aa).

The region spanning 5 to 183 (GLLIVFSGPS…AAERVKKIIE (179 aa)) is the Guanylate kinase-like domain. An ATP-binding site is contributed by 12-19 (GPSGVGKG).

The protein belongs to the guanylate kinase family.

The protein resides in the cytoplasm. The enzyme catalyses GMP + ATP = GDP + ADP. Its function is as follows. Essential for recycling GMP and indirectly, cGMP. This chain is Guanylate kinase (gmk), found in Lactococcus lactis subsp. lactis (strain IL1403) (Streptococcus lactis).